A 122-amino-acid polypeptide reads, in one-letter code: Large ribosomal subunit protein uL14 (122 aa).

Belongs to the universal ribosomal protein uL14 family. As to quaternary structure, part of the 50S ribosomal subunit. Forms a cluster with proteins L3 and L19. In the 70S ribosome, L14 and L19 interact and together make contacts with the 16S rRNA in bridges B5 and B8.

In terms of biological role, binds to 23S rRNA. Forms part of two intersubunit bridges in the 70S ribosome. The chain is Large ribosomal subunit protein uL14 from Nitrosospira multiformis (strain ATCC 25196 / NCIMB 11849 / C 71).